The following is a 213-amino-acid chain: Glycerol-3-phosphate acyltransferase (213 aa).

The next 5 helical transmembrane spans lie at 3 to 23 (LLLF…LWIG), 68 to 88 (ILLP…GFFA), 112 to 132 (VLLG…VLVL), 134 to 154 (LFSM…LSVL), and 163 to 183 (LPNY…IIII).

Belongs to the PlsY family. Probably interacts with PlsX.

The protein resides in the cell membrane. It carries out the reaction an acyl phosphate + sn-glycerol 3-phosphate = a 1-acyl-sn-glycero-3-phosphate + phosphate. It participates in lipid metabolism; phospholipid metabolism. Functionally, catalyzes the transfer of an acyl group from acyl-phosphate (acyl-PO(4)) to glycerol-3-phosphate (G3P) to form lysophosphatidic acid (LPA). This enzyme utilizes acyl-phosphate as fatty acyl donor, but not acyl-CoA or acyl-ACP. This chain is Glycerol-3-phosphate acyltransferase, found in Streptococcus pyogenes serotype M28 (strain MGAS6180).